Reading from the N-terminus, the 1015-residue chain is Protein HIRA (1015 aa).

2 WD repeats span residues His-11 to Asp-53 and Asn-68 to Thr-107. Ser-111 carries the phosphoserine modification. 5 WD repeats span residues Ser-129–Ala-168, Gly-172–Ser-211, Gly-220–Asp-263, Gly-266–Val-322, and Leu-326–Ser-367. The disordered stretch occupies residues Gln-408–Gly-431. Residues Leu-413–Gly-431 are compositionally biased toward polar residues. Positions Arg-421–Phe-479 are interaction with ASF1A. Residues Arg-421–Glu-727 form an interaction with CCNA1 region. The required for repression of histone gene transcription stretch occupies residues Glu-439–Ser-475. Low complexity-rich tracts occupy residues Ser-494–Ser-507 and Ala-540–Ser-556. The disordered stretch occupies residues Ser-494–Ile-558. Phosphoserine is present on Ser-548. Residue Thr-554 is modified to Phosphothreonine. The residue at position 556 (Ser-556) is a Phosphoserine. Thr-575 is modified (phosphothreonine). Phosphoserine is present on residues Ser-583, Ser-608, Ser-609, Ser-610, Ser-612, Ser-659, and Ser-673. Interaction with PAX3 regions lie at residues Lys-593–Leu-737 and Thr-738–Leu-826. The interval Glu-594–Gln-824 is interaction with histone H2B. Residues Ser-603–His-617 show a composition bias toward basic and acidic residues. The disordered stretch occupies residues Ser-603–Ser-623. The tract at residues Val-736 to Lys-1015 is interaction with histone H4.

It belongs to the WD repeat HIR1 family. Interacts with CCNA1, HIRIP3 and NFU1/HIRIP5. Part of a complex which includes ASF1A, CABIN1, histone H3.3, histone H4 and UBN1. Interacts with histone H2B, histone H3-3B, PAX3 and PAX7. Sumoylated. Post-translationally, phosphorylated by CDK2/CCNA1 and CDK2/CCNE1 on Thr-554 in vitro. Also phosphorylated on Thr-554 in vivo. Expressed in cerebrum, cerebellum, heart, kidney, liver, lung and spleen.

The protein resides in the nucleus. It is found in the PML body. In terms of biological role, required for the periodic repression of histone gene transcription during the cell cycle. Cooperates with ASF1A to promote replication-independent chromatin assembly. Required for the formation of senescence-associated heterochromatin foci (SAHF) and efficient senescence-associated cell cycle exit. The sequence is that of Protein HIRA (Hira) from Mus musculus (Mouse).